The primary structure comprises 623 residues: uncharacterized protein (623 aa).

The GAF domain maps to 28 to 171 (TSAEVSQRVL…TIATLFAQVQ (144 aa)). A GGDEF domain is found at 212-345 (GPVAALFLDL…GGDSVAIFTA (134 aa)). In terms of domain architecture, EAL spans 354–609 (RNDIELHLRR…AMRHMLSARR (256 aa)).

This is an uncharacterized protein from Mycobacterium tuberculosis (strain CDC 1551 / Oshkosh).